The chain runs to 645 residues: Cilia- and flagella-associated protein 221 homolog (645 aa).

A disordered region spans residues 381-408; sequence GGAVHQPSAPVGSSSSGGGGGSDPAFKP. The segment at 428–435 is interaction with calmodulin; that stretch reads THQRLQRR.

It belongs to the PCDP1 family. In terms of assembly, interacts with calmodulin; calcium-dependent. Part of the PDCP1 complex composed of CFAP46, CFAP54, CFAP74 and CFAP221; the PDCP1 complex binds calmodulin.

The protein localises to the cytoplasm. It localises to the cytoskeleton. Its subcellular location is the cilium axoneme. Functionally, may play a role in cilium morphogenesis. The polypeptide is Cilia- and flagella-associated protein 221 homolog (Chlamydomonas reinhardtii (Chlamydomonas smithii)).